Consider the following 104-residue polypeptide: ATP-dependent Clp protease adapter protein ClpS (104 aa).

It belongs to the ClpS family. In terms of assembly, binds to the N-terminal domain of the chaperone ClpA.

Functionally, involved in the modulation of the specificity of the ClpAP-mediated ATP-dependent protein degradation. This chain is ATP-dependent Clp protease adapter protein ClpS, found in Burkholderia mallei (strain NCTC 10247).